Consider the following 369-residue polypeptide: 3-dehydroquinate synthase (369 aa).

Residues 70–75 (DAEDGK), 104–108 (GAATD), 128–129 (TT), Lys141, Lys150, and 168–171 (TLET) contribute to the NAD(+) site. Residues Glu183, His246, and His262 each coordinate Zn(2+).

This sequence belongs to the sugar phosphate cyclases superfamily. Dehydroquinate synthase family. Co(2+) serves as cofactor. It depends on Zn(2+) as a cofactor. The cofactor is NAD(+).

Its subcellular location is the cytoplasm. The catalysed reaction is 7-phospho-2-dehydro-3-deoxy-D-arabino-heptonate = 3-dehydroquinate + phosphate. It participates in metabolic intermediate biosynthesis; chorismate biosynthesis; chorismate from D-erythrose 4-phosphate and phosphoenolpyruvate: step 2/7. Its function is as follows. Catalyzes the conversion of 3-deoxy-D-arabino-heptulosonate 7-phosphate (DAHP) to dehydroquinate (DHQ). The protein is 3-dehydroquinate synthase of Rhodococcus erythropolis (strain PR4 / NBRC 100887).